The sequence spans 184 residues: Large ribosomal subunit protein uL5c (184 aa).

This sequence belongs to the universal ribosomal protein uL5 family. In terms of assembly, part of the 50S ribosomal subunit; contacts the 5S rRNA.

The protein localises to the plastid. The protein resides in the chloroplast. Binds 5S rRNA, forms part of the central protuberance of the 50S subunit. The polypeptide is Large ribosomal subunit protein uL5c (rpl5) (Zygnema circumcarinatum (Green alga)).